The following is a 351-amino-acid chain: Histidine-rich glycoprotein (351 aa).

Residues 1-23 (MFTSLKKVATFSFLVWISQYSGS) form the signal peptide. The propeptide occupies 24–47 (NSCSSSLVKHIPQTGSNLTFDRVL). Asparagine 40 is a glycosylation site (N-linked (GlcNAc...) asparagine). Over residues 57 to 91 (LHEEHHHHHPEEHHEPHHEEHHHHHPEEHHEPHHE) the composition is skewed to basic and acidic residues. The disordered stretch occupies residues 57-351 (LHEEHHHHHP…DAHHHHHHHH (295 aa)). 6 consecutive repeat copies span residues 59 to 74 (EEHH…EPHH), 75 to 90 (EEHH…EPHH), 91 to 107 (EEHH…HHHH), 108 to 123 (PPHH…HHHH), 124 to 138 (AAHH…HHHH), and 139 to 153 (AAHH…HHHH). The interval 59–90 (EEHHHHHPEEHHEPHHEEHHHHHPEEHHEPHH) is 2 X 16 AA tandem repeats. Positions 91–123 (EEHHHHHPHPHHHHHHHPPHHHHHLGHHHHHHH) are 2 X 17 AA tandem repeats. The segment covering 92–351 (EHHHHHPHPH…DAHHHHHHHH (260 aa)) has biased composition (basic residues). A 2 X 15 AA tandem repeats region spans residues 124–153 (AAHHHHHEEHHHHHHAAHHHHHEEHHHHHH). An 18 X 10 AA tandem repeats region spans residues 173–351 (APHHHHHHHH…DAHHHHHHHH (179 aa)).

This chain is Histidine-rich glycoprotein, found in Plasmodium lophurae.